The following is a 459-amino-acid chain: tRNA modification GTPase MnmE (459 aa).

Residues Arg-20, Glu-85, and Arg-124 each contribute to the (6S)-5-formyl-5,6,7,8-tetrahydrofolate site. The 160-residue stretch at 221-380 (GLSTVIIGRP…LEMAIQSLFF (160 aa)) folds into the TrmE-type G domain. K(+) is bound at residue Asn-231. Residues 231 to 236 (NVGKSS), 250 to 256 (TDIPGTT), and 275 to 278 (DTAG) contribute to the GTP site. Position 235 (Ser-235) interacts with Mg(2+). 3 residues coordinate K(+): Thr-250, Ile-252, and Thr-255. Residue Thr-256 coordinates Mg(2+). Lys-459 contacts (6S)-5-formyl-5,6,7,8-tetrahydrofolate.

This sequence belongs to the TRAFAC class TrmE-Era-EngA-EngB-Septin-like GTPase superfamily. TrmE GTPase family. Homodimer. Heterotetramer of two MnmE and two MnmG subunits. The cofactor is K(+).

It localises to the cytoplasm. Functionally, exhibits a very high intrinsic GTPase hydrolysis rate. Involved in the addition of a carboxymethylaminomethyl (cmnm) group at the wobble position (U34) of certain tRNAs, forming tRNA-cmnm(5)s(2)U34. The polypeptide is tRNA modification GTPase MnmE (Bacillus pumilus (strain SAFR-032)).